The sequence spans 907 residues: Schlafen family member 13 (907 aa).

The tract at residues 1–353 (MEIHPSLVVE…WVRMMVDIGP (353 aa)) is n'-domain region. Catalysis depends on residues Glu205 and Glu210. Residues His281, Cys283, and Cys318 each contribute to the Zn(2+) site. ATP is bound at residue 604–611 (GMPGSGKT).

It belongs to the Schlafen family. Subgroup III subfamily. Mg(2+) serves as cofactor.

It localises to the cytoplasm. Its function is as follows. Endoribonuclease that cleaves tRNAs and rRNAs. Cleaves tRNAs 11 nucleotides from the 3'-terminus at the acceptor stem. Does not act on tRNA(Sec). The polypeptide is Schlafen family member 13 (Rattus norvegicus (Rat)).